An 87-amino-acid polypeptide reads, in one-letter code: Small ribosomal subunit protein uS15 (87 aa).

It belongs to the universal ribosomal protein uS15 family. Part of the 30S ribosomal subunit. Forms a bridge to the 50S subunit in the 70S ribosome, contacting the 23S rRNA.

In terms of biological role, one of the primary rRNA binding proteins, it binds directly to 16S rRNA where it helps nucleate assembly of the platform of the 30S subunit by binding and bridging several RNA helices of the 16S rRNA. Its function is as follows. Forms an intersubunit bridge (bridge B4) with the 23S rRNA of the 50S subunit in the ribosome. The protein is Small ribosomal subunit protein uS15 of Clostridium beijerinckii (strain ATCC 51743 / NCIMB 8052) (Clostridium acetobutylicum).